Reading from the N-terminus, the 163-residue chain is Large ribosomal subunit protein uL15 (163 aa).

This sequence belongs to the universal ribosomal protein uL15 family. As to quaternary structure, part of the 50S ribosomal subunit.

In terms of biological role, binds to the 23S rRNA. In Orientia tsutsugamushi (strain Ikeda) (Rickettsia tsutsugamushi), this protein is Large ribosomal subunit protein uL15.